A 482-amino-acid chain; its full sequence is UDP-N-acetylmuramate--L-alanine ligase (482 aa).

111-117 (GTHGKTT) lines the ATP pocket.

The protein belongs to the MurCDEF family.

It is found in the cytoplasm. The enzyme catalyses UDP-N-acetyl-alpha-D-muramate + L-alanine + ATP = UDP-N-acetyl-alpha-D-muramoyl-L-alanine + ADP + phosphate + H(+). It functions in the pathway cell wall biogenesis; peptidoglycan biosynthesis. Its function is as follows. Cell wall formation. The protein is UDP-N-acetylmuramate--L-alanine ligase of Symbiobacterium thermophilum (strain DSM 24528 / JCM 14929 / IAM 14863 / T).